Reading from the N-terminus, the 89-residue chain is Small ribosomal subunit protein uS15 (89 aa).

Belongs to the universal ribosomal protein uS15 family. As to quaternary structure, part of the 30S ribosomal subunit. Forms a bridge to the 50S subunit in the 70S ribosome, contacting the 23S rRNA.

Functionally, one of the primary rRNA binding proteins, it binds directly to 16S rRNA where it helps nucleate assembly of the platform of the 30S subunit by binding and bridging several RNA helices of the 16S rRNA. Its function is as follows. Forms an intersubunit bridge (bridge B4) with the 23S rRNA of the 50S subunit in the ribosome. This is Small ribosomal subunit protein uS15 from Rhizobium meliloti (strain 1021) (Ensifer meliloti).